Consider the following 124-residue polypeptide: Large ribosomal subunit protein uL22 (124 aa).

The protein belongs to the universal ribosomal protein uL22 family. Part of the 50S ribosomal subunit.

Functionally, this protein binds specifically to 23S rRNA; its binding is stimulated by other ribosomal proteins, e.g. L4, L17, and L20. It is important during the early stages of 50S assembly. It makes multiple contacts with different domains of the 23S rRNA in the assembled 50S subunit and ribosome. In terms of biological role, the globular domain of the protein is located near the polypeptide exit tunnel on the outside of the subunit, while an extended beta-hairpin is found that lines the wall of the exit tunnel in the center of the 70S ribosome. The sequence is that of Large ribosomal subunit protein uL22 from Synechococcus sp. (strain JA-2-3B'a(2-13)) (Cyanobacteria bacterium Yellowstone B-Prime).